A 677-amino-acid polypeptide reads, in one-letter code: Methionine--tRNA ligase (677 aa).

The 'HIGH' region motif lies at 15-25 (PYANGSIHLGH). Zn(2+)-binding residues include Cys146, Cys149, Cys159, and Cys162. Residues 333–337 (KMSKS) carry the 'KMSKS' region motif. Lys336 lines the ATP pocket. Positions 575–677 (DFAKVDLRVA…AGAKPGHQVK (103 aa)) constitute a tRNA-binding domain.

This sequence belongs to the class-I aminoacyl-tRNA synthetase family. MetG type 1 subfamily. In terms of assembly, homodimer. It depends on Zn(2+) as a cofactor.

It localises to the cytoplasm. The enzyme catalyses tRNA(Met) + L-methionine + ATP = L-methionyl-tRNA(Met) + AMP + diphosphate. Functionally, is required not only for elongation of protein synthesis but also for the initiation of all mRNA translation through initiator tRNA(fMet) aminoacylation. This chain is Methionine--tRNA ligase (metG), found in Escherichia coli (strain K12).